The following is a 217-amino-acid chain: Large ribosomal subunit protein uL1 (217 aa).

N-acetylserine is present on serine 2. Tyrosine 11 bears the Phosphotyrosine mark. 2 positions are modified to N6-acetyllysine: lysine 91 and lysine 106. Residue lysine 118 is modified to N6-acetyllysine; alternate. Lysine 118 is covalently cross-linked (Glycyl lysine isopeptide (Lys-Gly) (interchain with G-Cter in SUMO1); alternate). Lysine 118 participates in a covalent cross-link: Glycyl lysine isopeptide (Lys-Gly) (interchain with G-Cter in SUMO2); alternate. A Glycyl lysine isopeptide (Lys-Gly) (interchain with G-Cter in SUMO2) cross-link involves residue lysine 161.

The protein belongs to the universal ribosomal protein uL1 family. As to quaternary structure, component of the large ribosomal subunit.

It localises to the cytoplasm. Functionally, component of the large ribosomal subunit. The ribosome is a large ribonucleoprotein complex responsible for the synthesis of proteins in the cell. The protein is Large ribosomal subunit protein uL1 (RPL10A) of Bos taurus (Bovine).